The following is a 303-amino-acid chain: UDP-3-O-acyl-N-acetylglucosamine deacetylase (303 aa).

Residues His-77, His-236, and Asp-240 each coordinate Zn(2+). Residue His-263 is the Proton donor of the active site.

This sequence belongs to the LpxC family. Requires Zn(2+) as cofactor.

The enzyme catalyses a UDP-3-O-[(3R)-3-hydroxyacyl]-N-acetyl-alpha-D-glucosamine + H2O = a UDP-3-O-[(3R)-3-hydroxyacyl]-alpha-D-glucosamine + acetate. Its pathway is glycolipid biosynthesis; lipid IV(A) biosynthesis; lipid IV(A) from (3R)-3-hydroxytetradecanoyl-[acyl-carrier-protein] and UDP-N-acetyl-alpha-D-glucosamine: step 2/6. Catalyzes the hydrolysis of UDP-3-O-myristoyl-N-acetylglucosamine to form UDP-3-O-myristoylglucosamine and acetate, the committed step in lipid A biosynthesis. In Ruthia magnifica subsp. Calyptogena magnifica, this protein is UDP-3-O-acyl-N-acetylglucosamine deacetylase.